Reading from the N-terminus, the 349-residue chain is Mitochondrial carrier protein SCaMC-3L (349 aa).

The next 4 helical transmembrane spans lie at 88 to 104 (GALWKFLLSGAMAGAVS), 149 to 168 (GNGINVLKIAPEYAIKFSVF), 188 to 205 (LLAGSLAVATSQTLINPM), and 243 to 261 (YLPNMLGIIPYACTDLAVY). Solcar repeat units follow at residues 88-174 (GALW…CKNY) and 182-267 (PPFQ…LNCL).

Belongs to the mitochondrial carrier (TC 2.A.29) family.

It localises to the mitochondrion inner membrane. The enzyme catalyses Mg(2+)(out) + phosphate(in) + ATP(out) = Mg(2+)(in) + phosphate(out) + ATP(in). It carries out the reaction ADP(out) + phosphate(in) + H(+)(out) = ADP(in) + phosphate(out) + H(+)(in). In terms of biological role, calcium-independent ATP-Mg/Pi exchanger that catalyzes the electroneutral exchange of Mg-ATP or free ADP against an hydrogenphosphate and participates in the net transport of adenine nucleotides across the mitochondria inner membrane. This chain is Mitochondrial carrier protein SCaMC-3L, found in Bos taurus (Bovine).